Reading from the N-terminus, the 80-residue chain is D-alanyl carrier protein 2 (80 aa).

The 80-residue stretch at 1-80 folds into the Carrier domain; the sequence is MIMDDVKATV…KIVAKVASLQ (80 aa). S38 is subject to O-(pantetheine 4'-phosphoryl)serine.

Belongs to the DltC family. In terms of processing, 4'-phosphopantetheine is transferred from CoA to a specific serine of apo-DCP.

Its subcellular location is the cytoplasm. It functions in the pathway cell wall biogenesis; lipoteichoic acid biosynthesis. Its function is as follows. Carrier protein involved in the D-alanylation of lipoteichoic acid (LTA). The loading of thioester-linked D-alanine onto DltC is catalyzed by D-alanine--D-alanyl carrier protein ligase DltA. The DltC-carried D-alanyl group is further transferred to cell membrane phosphatidylglycerol (PG) by forming an ester bond, probably catalyzed by DltD. D-alanylation of LTA plays an important role in modulating the properties of the cell wall in Gram-positive bacteria, influencing the net charge of the cell wall. This is D-alanyl carrier protein 2 from Lactiplantibacillus plantarum (strain ATCC BAA-793 / NCIMB 8826 / WCFS1) (Lactobacillus plantarum).